The following is a 186-amino-acid chain: Heat shock protein 23 (186 aa).

The sHSP domain occupies 53 to 161 (VGASSGSSGA…KGNERIVQIQ (109 aa)). Residues 163–186 (VGPAHLNVKENPKEAVEQDNGNDK) form a disordered region. Basic and acidic residues predominate over residues 169 to 186 (NVKENPKEAVEQDNGNDK).

It belongs to the small heat shock protein (HSP20) family.

In Drosophila melanogaster (Fruit fly), this protein is Heat shock protein 23 (Hsp23).